The sequence spans 1165 residues: MVEKSSERFDKQMAGRLGDIDFTGVSRTRGKFVRVTSSTDPAEIYQILTKQWGLAPPHLVVALMGGDEVAQLKPWLRDTLRKGLVKAAQSTGAWILTSGLRFGITKNLGQAVRDHSLASTSPKVRVVAIGIAPWNMIQNRDLLLSAKPDHPATYPTEDLPYGAVYSLDCNHSHFILVDEDPKRPGATGEMRVKMLKHISLQRTGYGGTGSIEIPVLCLLVHGEPRILQKMYKNIQNSIPWLILAGSGGVADILVTLMDRGCWDADIVQELLINTFPDGLHSTEITSWTKLIQRILDHGHLLTVHDPEQDSELDTVILKALVKACKSQSQEAQDFLDELKLAVAWNRVDIAKSEIFSGDVQWSAQDLEEVMMEALVNDKPDFVRLFVDNGVNIKQFLTYGRLQELYCSVSEKNLLHTLLLKKNQERQAQLARKRMSGNPNNELGDRKFRFTFHEVSKVLKDFLDDTCKGFYQKLPAERMGKGRLFHSQKNLPDMDRRCEHPWRDLFLWAILQNRQEMANYFWAMGPEAVAAALVGCKIMKEMAHLATEAESARSMKNAKYEQFAMDLFSECYSNSEDRAYSLLVRKTCCWSKATVLNIATLAEAKCFFAHDGVQALLTKVWWGAMRTDTSISRLVLTFFIPPLVWTSLIKFNPEEQVSKDEGEPFAELDSLETEQALLLTDGDPVAGEGSAETAARSCSATFIRVVLRRWNRFWSAPVTVFMGNVIMYFAFLILFSYVLLLDFRPPPPYGPSAAEIILYFWVFTLVLEEIRQSFFTDEDMSILKKMKLYVEDNWNKCDMVAISLFVVGLSCRMAMSTYEAGRTVLALDFMVFTLRLIHIFAIHKQLGPKIIIVERMIKDVFFFLFFLSVWLIAYGVTTQALLHPNDPRIDWVFRRALYRPYLHIFGQIPLEEIDAAKMPDDNCTTDVQEIILGTLPPCPNIYANWLVILLLVIYLLVTNVLLLNLLIAMFSYTFQVVQENADIFWKFQRYNLIVEYHSRPALAPPFIIISHITQALLSFIKKTENTQDLLERELPSGLDQKLMTWETVQKENYLAKLEHEHRESSGERLRYTSSKVQTLLRMVGGFKDQEKRMATVETEVRYCGEVLSWIAECFHKSTLKCDRDAPKAPRSIAGSSRDQQPQGAKRQQPAGHPAYGTDKKLPFIDH.

The Cytoplasmic portion of the chain corresponds to 1-715 (MVEKSSERFD…LRRWNRFWSA (715 aa)). S121 is modified (phosphoserine). 5 residues coordinate Ca(2+): E212, C324, D333, D336, and E337. Residues 716 to 740 (PVTVFMGNVIMYFAFLILFSYVLLL) traverse the membrane as a helical segment. Residues 741–751 (DFRPPPPYGPS) are Extracellular-facing. Residues 752–771 (AAEIILYFWVFTLVLEEIRQ) traverse the membrane as a helical segment. Residues E768 and Q771 each contribute to the Ca(2+) site. The Cytoplasmic portion of the chain corresponds to 772–792 (SFFTDEDMSILKKMKLYVEDN). Residues 793–811 (WNKCDMVAISLFVVGLSCR) traverse the membrane as a helical segment. N794 and D797 together coordinate Ca(2+). At 812-818 (MAMSTYE) the chain is on the extracellular side. A helical transmembrane segment spans residues 819–841 (AGRTVLALDFMVFTLRLIHIFAI). Topologically, residues 842-850 (HKQLGPKII) are cytoplasmic. The chain crosses the membrane as a helical span at residues 851–880 (IVERMIKDVFFFLFFLSVWLIAYGVTTQAL). Over 881-889 (LHPNDPRID) the chain is Extracellular. The pore-forming intramembrane region spans 890-930 (WVFRRALYRPYLHIFGQIPLEEIDAAKMPDDNCTTDVQEII). The Selectivity filter motif lies at 904–906 (FGQ). The Extracellular segment spans residues 931–942 (LGTLPPCPNIYA). Residues 943 to 977 (NWLVILLLVIYLLVTNVLLLNLLIAMFSYTFQVVQ) form a helical membrane-spanning segment. The Cytoplasmic portion of the chain corresponds to 978–1165 (ENADIFWKFQ…TDKKLPFIDH (188 aa)). E994 contributes to the Ca(2+) binding site. The interval 1122–1165 (RDAPKAPRSIAGSSRDQQPQGAKRQQPAGHPAYGTDKKLPFIDH) is disordered. Residues 1132–1141 (AGSSRDQQPQ) are compositionally biased toward polar residues. A compositionally biased stretch (basic and acidic residues) spans 1156-1165 (TDKKLPFIDH).

It belongs to the transient receptor (TC 1.A.4) family. LTrpC subfamily. TRPM5 sub-subfamily. In terms of assembly, homotetramer.

It is found in the cell membrane. It catalyses the reaction Na(+)(in) = Na(+)(out). It carries out the reaction K(+)(in) = K(+)(out). Ca(2+)-activated cation channel. Displays voltage dependence modulation. Regulated by PI(4,5)P2 levels. PI(4,5)P 2 reverses the Ca(2+) -induced desensitization of channels. Is highly temperature-sensitive. Monovalent cation-selective ion channel activated by intracellular Ca(2+) in a voltage- and temperature-dependent manner. Mediates the transport of Na(+), K(+) and Cs(+) ions equally well. Activated directly by increase in intracellular Ca(2+), but is impermeable to it. The activation mechanism of TRPM5 involves a multistep process. TRPM5 activation involves ligand binding (i.e., tastant molecule, glucose stimulation) to Gq/G-protein coupled receptors (GPCR) and leads to the breakdown of phosphatidylinositol bisphosphate (PIP2) into diacylglycerol (DAG) and inositol trisphosphate (IP3), IP3 binds to its receptors in the endoplasmic reticulum and cause Ca(2+) release. Simultaneously with the intracellular Ca(2+) release, DAG activates the protein kinase C (PKC), which phosphorylates the TRPM5 channel. This phosphorylation combined with the bound Ca(2+), leads to a robust inward current allowing the entry of sodium ions (Na+) into the cell. This ion influx depolarizes the cell membrane, generating action potentials that propagate TRPM5 signals. This is Transient receptor potential cation channel subfamily M member 5 from Danio rerio (Zebrafish).